We begin with the raw amino-acid sequence, 992 residues long: Disks large-associated protein 4 (992 aa).

Basic and acidic residues predominate over residues 1–20 (MKGLGDSRPRHLSDSLDPPH). Disordered stretches follow at residues 1-30 (MKGLGDSRPRHLSDSLDPPHEPLFAGTDRN), 47-66 (PGQNTLPGDGLFPLNNQLPP), and 157-206 (LEGT…GWWS). A compositionally biased stretch (gly residues) spans 162 to 171 (GKVGGNGSKK). The segment covering 172–194 (GGMEDGKGRRAKSKERAKAGEPK) has biased composition (basic and acidic residues). S206 and S207 each carry phosphoserine. The residue at position 291 (R291) is an Omega-N-methylarginine. Residues 342 to 396 (STTLLSPRETDAAAEGPIPCRRMRSGSYIKAMGDEDSDESGGSPKPSPKTAARRQ) form a disordered region. Phosphoserine is present on residues S378, S381, S388, S405, S415, and S421. 3 disordered regions span residues 527 to 751 (SVSL…GPRQ), 763 to 798 (SYGDNSDPALEASSLPPPDPWLETSSSSPAEPAQPG), and 915 to 992 (TPEK…QTRL). Positions 528–554 (VSLQSLSPPPSTGSLSNSRTLPSSSCL) are enriched in low complexity. Residues 576-591 (VTVQSSTESAQDTYLD) are compositionally biased toward polar residues. Residues S580, S581, S609, S611, S665, and S744 each carry the phosphoserine modification. Residues 600–620 (TSQSGLSNSSDSLDSSTRPPS) show a composition bias toward low complexity. Residue T915 is modified to Phosphothreonine. 2 stretches are compositionally biased toward basic and acidic residues: residues 915–925 (TPEKRKEEKKP) and 940–958 (VSRDKASDASDKQRQEARK). Positions 969–978 (VRQNSATESA) are enriched in polar residues. S973 carries the post-translational modification Phosphoserine.

The protein belongs to the SAPAP family. As to quaternary structure, interacts with DLG1 and DLG4/PSD-95.

Its subcellular location is the membrane. May play a role in the molecular organization of synapses and neuronal cell signaling. Could be an adapter protein linking ion channel to the subsynaptic cytoskeleton. May induce enrichment of PSD-95/SAP90 at the plasma membrane. This chain is Disks large-associated protein 4 (DLGAP4), found in Homo sapiens (Human).